Reading from the N-terminus, the 40-residue chain is RNA replication protein (40 aa).

This sequence belongs to the potexviruses/carlaviruses RNA replication protein family.

The enzyme catalyses RNA(n) + a ribonucleoside 5'-triphosphate = RNA(n+1) + diphosphate. It catalyses the reaction ATP + H2O = ADP + phosphate + H(+). In terms of biological role, RNA replication. The central part of this protein possibly functions as an ATP-binding helicase. The polypeptide is RNA replication protein (Lily symptomless virus (LSV)).